A 148-amino-acid polypeptide reads, in one-letter code: 3-dehydroquinate dehydratase (148 aa).

The active-site Proton acceptor is the Y23. Residues N75, H81, and D88 each coordinate substrate. H101 (proton donor) is an active-site residue. Substrate is bound by residues 102 to 103 (LS) and R112.

Belongs to the type-II 3-dehydroquinase family. Homododecamer.

The enzyme catalyses 3-dehydroquinate = 3-dehydroshikimate + H2O. Its pathway is metabolic intermediate biosynthesis; chorismate biosynthesis; chorismate from D-erythrose 4-phosphate and phosphoenolpyruvate: step 3/7. Catalyzes a trans-dehydration via an enolate intermediate. This Xanthomonas campestris pv. campestris (strain 8004) protein is 3-dehydroquinate dehydratase.